The following is a 452-amino-acid chain: NAD kinase 2, mitochondrial (452 aa).

A mitochondrion-targeting transit peptide spans 1 to 50 (MTCYRGFLLGSCRRVAGGRAALRGSGSGADGRRHLGHGQPRELAGGGSPA). A disordered region spans residues 23–52 (RGSGSGADGRRHLGHGQPRELAGGGSPADG). Lys-64 bears the N6-acetyllysine; alternate mark. The residue at position 64 (Lys-64) is an N6-succinyllysine; alternate. Residue Ser-176 is modified to Phosphoserine. An N6-succinyllysine modification is found at Lys-312. Lys-327 carries the post-translational modification N6-acetyllysine; alternate. Lys-327 carries the N6-succinyllysine; alternate modification. Position 377 is a phosphoserine (Ser-377). Lys-407 carries the N6-acetyllysine modification.

The protein belongs to the NAD kinase family. In terms of assembly, homodimer.

It is found in the mitochondrion. It catalyses the reaction NAD(+) + ATP = ADP + NADP(+) + H(+). Inhibited by NADH, NADPH and NADP(+). Its function is as follows. Mitochondrial NAD(+) kinase that phosphorylates NAD(+) to yield NADP(+). Can use both ATP or inorganic polyphosphate as the phosphoryl donor. In Mus musculus (Mouse), this protein is NAD kinase 2, mitochondrial (Nadk2).